The following is a 225-amino-acid chain: Urease accessory protein UreF (225 aa).

This sequence belongs to the UreF family. As to quaternary structure, ureD, UreF and UreG form a complex that acts as a GTP-hydrolysis-dependent molecular chaperone, activating the urease apoprotein by helping to assemble the nickel containing metallocenter of UreC. The UreE protein probably delivers the nickel.

The protein resides in the cytoplasm. In terms of biological role, required for maturation of urease via the functional incorporation of the urease nickel metallocenter. The sequence is that of Urease accessory protein UreF from Geobacillus kaustophilus (strain HTA426).